Here is a 250-residue protein sequence, read N- to C-terminus: Probable replication-associated protein repA2 (250 aa).

The protein belongs to the IncFII RepA family.

Functionally, this protein is essential for plasmid replication; it is involved in copy control functions. This is Probable replication-associated protein repA2 (repA2) from Buchnera aphidicola subsp. Acyrthosiphon pisum (strain APS) (Acyrthosiphon pisum symbiotic bacterium).